The chain runs to 239 residues: NADH-quinone oxidoreductase subunit I 1 (239 aa).

4Fe-4S ferredoxin-type domains follow at residues 81–111 (LVPR…IEAA) and 123–152 (AKFV…MDSG). [4Fe-4S] cluster contacts are provided by Cys-91, Cys-94, Cys-97, Cys-101, Cys-132, Cys-135, Cys-138, and Cys-142.

This sequence belongs to the complex I 23 kDa subunit family. As to quaternary structure, NDH-1 is composed of 14 different subunits. Subunits NuoA, H, J, K, L, M, N constitute the membrane sector of the complex. [4Fe-4S] cluster serves as cofactor.

Its subcellular location is the cell inner membrane. It catalyses the reaction a quinone + NADH + 5 H(+)(in) = a quinol + NAD(+) + 4 H(+)(out). Functionally, NDH-1 shuttles electrons from NADH, via FMN and iron-sulfur (Fe-S) centers, to quinones in the respiratory chain. The immediate electron acceptor for the enzyme in this species is believed to be ubiquinone. Couples the redox reaction to proton translocation (for every two electrons transferred, four hydrogen ions are translocated across the cytoplasmic membrane), and thus conserves the redox energy in a proton gradient. The protein is NADH-quinone oxidoreductase subunit I 1 of Anaeromyxobacter dehalogenans (strain 2CP-C).